Reading from the N-terminus, the 355-residue chain is Peptide chain release factor 1 (355 aa).

Glutamine 230 is subject to N5-methylglutamine.

Belongs to the prokaryotic/mitochondrial release factor family. Post-translationally, methylated by PrmC. Methylation increases the termination efficiency of RF1.

Its subcellular location is the cytoplasm. Its function is as follows. Peptide chain release factor 1 directs the termination of translation in response to the peptide chain termination codons UAG and UAA. This is Peptide chain release factor 1 from Geobacter sulfurreducens (strain ATCC 51573 / DSM 12127 / PCA).